The sequence spans 66 residues: MKVTFQVPSITCNHCVDKIEKFVGEIEGVSFIDASVEKKSVVVEFDTPATQDLIKEALLDAGQEVV.

In terms of domain architecture, HMA spans 1–66 (MKVTFQVPSI…ALLDAGQEVV (66 aa)). Cu cation is bound by residues cysteine 12 and cysteine 15.

Part of a cation-transporting system which is associated with copper export out of the H.pylori cells. The chain is COP-associated protein (copP) from Helicobacter pylori (strain J99 / ATCC 700824) (Campylobacter pylori J99).